The sequence spans 931 residues: Valine--tRNA ligase (931 aa).

The 'HIGH' region motif lies at Pro-42–His-52. The short motif at Lys-523–Ser-527 is the 'KMSKS' region element. Lys-526 contributes to the ATP binding site. A coiled-coil region spans residues Met-859–Leu-931.

This sequence belongs to the class-I aminoacyl-tRNA synthetase family. ValS type 1 subfamily. Monomer.

It localises to the cytoplasm. It catalyses the reaction tRNA(Val) + L-valine + ATP = L-valyl-tRNA(Val) + AMP + diphosphate. Catalyzes the attachment of valine to tRNA(Val). As ValRS can inadvertently accommodate and process structurally similar amino acids such as threonine, to avoid such errors, it has a 'posttransfer' editing activity that hydrolyzes mischarged Thr-tRNA(Val) in a tRNA-dependent manner. The polypeptide is Valine--tRNA ligase (Alcanivorax borkumensis (strain ATCC 700651 / DSM 11573 / NCIMB 13689 / SK2)).